Here is a 568-residue protein sequence, read N- to C-terminus: MASPALISETEAWKDLKAHVEDIKRTHLRELMGDTERCQSMMVEFDNIFLDYSRQQASPDTINKLYKLADAAHLKQKIDRMYNGDHINSTENRSVLHVALRAPRNSAICSDGKNVVPDVWNVLDKIKDFSERVRNGSWVGATGKELKDVIAVGIGGSFLGPLFVHTALQTDPEASKNARGRELRFLANVDPIDAARNISGLDPETTLVVVVSKTFTTAETMLNARTLREWISSALGPSAVAKHMVAVSTNLPLVEKFGIDPNNAFAFWDWVGGRYSVCSAVGVLPLSLQYGFAVVEKFLQGAHNIDQHFSSAPFEKNIPVLLGLLSVWNVSFLGYPARAILPYSQALEKLAPHIQQVSMESNGKGVSIDGLPLPFESGEIDFGEPGTNGQHSFYQLIHQGRVIPCDFIGVVKSQQPVYLKGEVVNNHDELMSNFFAQPDALAYGKTPEQLKKENVSEHLIPHKTFTGNRPSVSILLPTLDAYRIGQLLAIYEHRVAVQGFIWGINSFDQWGVELGKSLATQVRKQLHASRVKGESVEGFNFSTKTLLTRYLEATSDVPAAPSTLLPKI.

E360 serves as the catalytic Proton donor. Catalysis depends on residues H391 and K516.

This sequence belongs to the GPI family. As to quaternary structure, homodimer.

The protein localises to the cytoplasm. The catalysed reaction is alpha-D-glucose 6-phosphate = beta-D-fructose 6-phosphate. Its pathway is carbohydrate degradation; glycolysis; D-glyceraldehyde 3-phosphate and glycerone phosphate from D-glucose: step 2/4. The polypeptide is Glucose-6-phosphate isomerase, cytosolic (PGIC) (Oenothera sinuata var. hirsuta (Mexican evening primrose)).